We begin with the raw amino-acid sequence, 142 residues long: Hemoglobin subunit alpha (142 aa).

The 141-residue stretch at 2–142 (VLSADDKANI…VSTVLTSKYR (141 aa)) folds into the Globin domain. Position 4 is a phosphoserine (Ser-4). N6-succinyllysine is present on residues Lys-8 and Lys-12. An N6-acetyllysine; alternate modification is found at Lys-17. Lys-17 is subject to N6-succinyllysine; alternate. Tyr-25 carries the phosphotyrosine modification. At Ser-36 the chain carries Phosphoserine. An N6-succinyllysine modification is found at Lys-41. Residue Ser-50 is modified to Phosphoserine. Position 59 (His-59) interacts with O2. His-88 contributes to the heme b binding site. Thr-109 bears the Phosphothreonine mark. Ser-125 and Ser-132 each carry phosphoserine. Phosphothreonine is present on residues Thr-135 and Thr-138. Ser-139 bears the Phosphoserine mark.

The protein belongs to the globin family. In terms of assembly, heterotetramer of two alpha chains and two beta chains. In terms of tissue distribution, red blood cells.

Its function is as follows. Involved in oxygen transport from the lung to the various peripheral tissues. Functionally, hemopressin acts as an antagonist peptide of the cannabinoid receptor CNR1. Hemopressin-binding efficiently blocks cannabinoid receptor CNR1 and subsequent signaling. This chain is Hemoglobin subunit alpha (HBA), found in Cricetomys gambianus (Northern giant pouched rat).